The sequence spans 182 residues: Isopentenyl-diphosphate Delta-isomerase (182 aa).

Mn(2+) is bound by residues H25 and H32. Residues L30 to M164 enclose the Nudix hydrolase domain. C67 is an active-site residue. Residue H69 coordinates Mn(2+). E87 is a binding site for Mg(2+). E114 and E116 together coordinate Mn(2+). E116 is an active-site residue.

It belongs to the IPP isomerase type 1 family. As to quaternary structure, homodimer. It depends on Mg(2+) as a cofactor. Requires Mn(2+) as cofactor.

The protein localises to the cytoplasm. The catalysed reaction is isopentenyl diphosphate = dimethylallyl diphosphate. It functions in the pathway isoprenoid biosynthesis; dimethylallyl diphosphate biosynthesis; dimethylallyl diphosphate from isopentenyl diphosphate: step 1/1. Catalyzes the 1,3-allylic rearrangement of the homoallylic substrate isopentenyl (IPP) to its highly electrophilic allylic isomer, dimethylallyl diphosphate (DMAPP). This chain is Isopentenyl-diphosphate Delta-isomerase, found in Shigella boydii serotype 18 (strain CDC 3083-94 / BS512).